The sequence spans 89 residues: FXYD domain-containing ion transport regulator 4 (89 aa).

Residues Met1–Asn20 form the signal peptide. Topologically, residues Asp21 to Gln38 are extracellular. The chain crosses the membrane as a helical span at residues Leu39–Gly59. Residues Lys60–Cys89 lie on the Cytoplasmic side of the membrane.

It belongs to the FXYD family. Regulatory subunit of the sodium/potassium-transporting ATPase which is composed of a catalytic alpha subunit, a non-catalytic beta subunit and a regulatory subunit. The regulatory subunit, a member of the FXYD protein family, modulates the enzymatic activity in a tissue- and isoform-specific way by changing affinities of the Na+/K+-ATPase toward Na(+), K(+) or ATP.

The protein resides in the cell membrane. It localises to the basolateral cell membrane. Functionally, associates with and regulates the activity of the sodium/potassium-transporting ATPase (NKA) which catalyzes the hydrolysis of ATP coupled with the exchange of Na(+) and K(+) ions across the plasma membrane. Increases the apparent affinity of the transporter for Na(+) and increases NKA activity. This Homo sapiens (Human) protein is FXYD domain-containing ion transport regulator 4 (FXYD4).